The sequence spans 169 residues: Disulfide bond formation protein B (169 aa).

Residues 1-14 lie on the Cytoplasmic side of the membrane; the sequence is MNNLTLSLHRERRL. Residues 15–31 form a helical membrane-spanning segment; sequence LVLLGLVCLALLAGALY. Residues 32 to 49 are Periplasmic-facing; the sequence is LQYVKNEDPCPLCIIQRY. A disulfide bond links cysteine 41 and cysteine 44. A helical membrane pass occupies residues 50–64; that stretch reads FFVLIAVFAFIGAGM. Residues 65–71 lie on the Cytoplasmic side of the membrane; that stretch reads ASGAGIA. The chain crosses the membrane as a helical span at residues 72–89; it reads VIEALIVLSAAAGVGTAA. Topologically, residues 90–144 are periplasmic; it reads RHLYVQLNPGFSCGFDALQPVVDSLPPAHWLPGVFKVAGLCETVYPPIFGILLPG. An intrachain disulfide couples cysteine 102 to cysteine 130. Residues 145–163 traverse the membrane as a helical segment; the sequence is WALIAFALIVVPVAASLLR. The Cytoplasmic segment spans residues 164-169; sequence HRGRLR.

Belongs to the DsbB family.

Its subcellular location is the cell inner membrane. In terms of biological role, required for disulfide bond formation in some periplasmic proteins. Acts by oxidizing the DsbA protein. The protein is Disulfide bond formation protein B of Burkholderia thailandensis (strain ATCC 700388 / DSM 13276 / CCUG 48851 / CIP 106301 / E264).